An 870-amino-acid chain; its full sequence is MPKKNSPLLPKETTPTQSSVDTSGSSNLTWPVSEHTIRRPLWARLLGQILDPWLDLSIEPEHCVQYPEHCVQYNDGRPIIYVLEDYGLCNTLILDKACRKTKLPSPLIPLPGNPLQRKRAYLALSRRSSSNSLIPNQRGGKTHSDSLANLLQAHRIRDTLDVHLVPVSIFIGRTPDRQSGWFAVLFSENWALVGRFRRLLAVLLNGRNTIVCFAPPISVRQTLNEGLPPERTLRKLQRVLRAHFRRIRETVIGPDLSTRRLLVDNVLATEAVREAIASQAKRDGTDLSETWRKAQAYAWEIAADYSSPVIRSADFLFSHVWNRIYAGVLIHHVDSFKETAPGHEVVYVPSHRSHIDYLLLSYCLYQCGIVLPHIVAGINLNLPIVGTLLRKCGAFFIRRSIKGNMLYSIVLSEYVAQLVAGGYSLEYFIEGGRSRTGRLLQPKGGMIMMTLQAFLRQPRRPVLFQPIYIGYEKLIEGTSYLDELSGEPKKKESIWRLFWNIPKVLKQKYGQVVVNFGEPIALNDVLAELAPEWEGQALNENEKPAWLSNTVNHLARQIQTRINSAADVNPINLLALALLSTPKHAMGEADLIAQITLCKKILLELPYSNRVTVTPHTPERIIAHAEQINILTRVHHPLGDVLRVDGDNAVLLSYFRNNVLHLFTASAWVACCFKNNRRISRIALIRLGVGMYPFLQAELFLPWTEDQFAQHIQQVIELFVREGLLLSAGDEEEDPLTRNTSQTDEVFRLRAISHSLQQAFERYYITISILVKNGPGTLSASELESLCQLAAQRLSLLYASTAPEFFDKGLFRGFIQKLRELNLVWPDTYSKLLFDERLDTSAKDAQVILGRELRHTIERISPEATKPAPK.

The interval 1–27 (MPKKNSPLLPKETTPTQSSVDTSGSSN) is disordered. Residues 13–27 (TTPTQSSVDTSGSSN) are compositionally biased toward polar residues. Residues 351–356 (HRSHID) carry the HXXXXD motif motif.

This sequence belongs to the GPAT/DAPAT family.

It is found in the cell inner membrane. The enzyme catalyses sn-glycerol 3-phosphate + an acyl-CoA = a 1-acyl-sn-glycero-3-phosphate + CoA. It functions in the pathway phospholipid metabolism; CDP-diacylglycerol biosynthesis; CDP-diacylglycerol from sn-glycerol 3-phosphate: step 1/3. In Xylella fastidiosa (strain 9a5c), this protein is Glycerol-3-phosphate acyltransferase (plsB).